The sequence spans 131 residues: D-ribose pyranase (131 aa).

H20 acts as the Proton donor in catalysis. Substrate is bound by residues D28, H98, and 120–122; that span reads YAN.

The protein belongs to the RbsD / FucU family. RbsD subfamily. As to quaternary structure, homodecamer.

Its subcellular location is the cytoplasm. The catalysed reaction is beta-D-ribopyranose = beta-D-ribofuranose. Its pathway is carbohydrate metabolism; D-ribose degradation; D-ribose 5-phosphate from beta-D-ribopyranose: step 1/2. Catalyzes the interconversion of beta-pyran and beta-furan forms of D-ribose. This Clostridium perfringens (strain 13 / Type A) protein is D-ribose pyranase.